The chain runs to 259 residues: Ribonuclease HII (259 aa).

One can recognise an RNase H type-2 domain in the interval 72-259 (ERIAGIDEAG…PVREALGVQS (188 aa)). 3 residues coordinate a divalent metal cation: D78, E79, and D170.

This sequence belongs to the RNase HII family. It depends on Mn(2+) as a cofactor. Mg(2+) serves as cofactor.

The protein resides in the cytoplasm. The catalysed reaction is Endonucleolytic cleavage to 5'-phosphomonoester.. In terms of biological role, endonuclease that specifically degrades the RNA of RNA-DNA hybrids. In Geobacillus thermodenitrificans (strain NG80-2), this protein is Ribonuclease HII.